Reading from the N-terminus, the 384-residue chain is N-acetyldiaminopimelate deacetylase (384 aa).

Aspartate 73 is a catalytic residue. Catalysis depends on glutamate 132, which acts as the Proton acceptor.

This sequence belongs to the peptidase M20A family. N-acetyldiaminopimelate deacetylase subfamily.

It carries out the reaction N-acetyl-(2S,6S)-2,6-diaminopimelate + H2O = (2S,6S)-2,6-diaminopimelate + acetate. It participates in amino-acid biosynthesis; L-lysine biosynthesis via DAP pathway; LL-2,6-diaminopimelate from (S)-tetrahydrodipicolinate (acetylase route): step 3/3. Functionally, catalyzes the conversion of N-acetyl-diaminopimelate to diaminopimelate and acetate. This chain is N-acetyldiaminopimelate deacetylase, found in Limosilactobacillus fermentum (strain NBRC 3956 / LMG 18251) (Lactobacillus fermentum).